We begin with the raw amino-acid sequence, 382 residues long: Cell division protein FtsZ (382 aa).

GTP is bound by residues 21–25, 108–110, E139, R143, and D187; these read GGGNN and GTG. The segment at 320 to 382 is disordered; that stretch reads KDVTKPQRPS…TFLRNRNKRG (63 aa). Residues 326–341 show a composition bias toward polar residues; that stretch reads QRPSLNQSIKTHNQSV. A compositionally biased stretch (basic and acidic residues) spans 342 to 351; sequence PKREPKREEP. The span at 352 to 365 shows a compositional bias: polar residues; the sequence is QQQNTVSRHTSQPA.

The protein belongs to the FtsZ family. In terms of assembly, homodimer. Polymerizes to form a dynamic ring structure in a strictly GTP-dependent manner. Interacts directly with several other division proteins. Interacts with FtsA. Interacts with Phi29 DNA replication protein 1. Interacts with the cell division inhibitor MciZ.

The protein resides in the cytoplasm. With respect to regulation, during sporulation, is negatively regulated by MciZ, which binds to FtsZ and inhibits its polymerization and the formation of the Z ring. Its function is as follows. Essential cell division protein that forms a contractile ring structure (Z ring) at the future cell division site. The regulation of the ring assembly controls the timing and the location of cell division. One of the functions of the FtsZ ring is to recruit other cell division proteins to the septum to produce a new cell wall between the dividing cells. Binds GTP and shows GTPase activity. This Bacillus subtilis (strain 168) protein is Cell division protein FtsZ.